The sequence spans 92 residues: Evasin P942 (92 aa).

Residues 1–26 (MEVKTFAFLQIAVLIALGLHLAPAGS) form the signal peptide. Disulfide bonds link Cys44-Cys63, Cys48-Cys65, and Cys59-Cys76. An N-linked (GlcNAc...) asparagine glycan is attached at Asn47. N-linked (GlcNAc...) asparagine glycosylation occurs at Asn70.

Its subcellular location is the secreted. Salivary chemokine-binding protein which binds to host chemokines CXCL1, CXCL2, CXCL3, CXCL4, CXCL5, CXCL6, CXCL10, CXCL11 and CXCL13. The protein is Evasin P942 of Ixodes ricinus (Common tick).